A 112-amino-acid chain; its full sequence is Large ribosomal subunit protein uL24 (112 aa).

It belongs to the universal ribosomal protein uL24 family. Part of the 50S ribosomal subunit.

One of two assembly initiator proteins, it binds directly to the 5'-end of the 23S rRNA, where it nucleates assembly of the 50S subunit. Its function is as follows. One of the proteins that surrounds the polypeptide exit tunnel on the outside of the subunit. The polypeptide is Large ribosomal subunit protein uL24 (Magnetococcus marinus (strain ATCC BAA-1437 / JCM 17883 / MC-1)).